A 1038-amino-acid polypeptide reads, in one-letter code: Translation initiation factor IF-2 (1038 aa).

The segment at 32–442 is disordered; the sequence is GSALASLSDE…RKGVNTAAPR (411 aa). Composition is skewed to low complexity over residues 65–77, 100–113, and 131–147; these read PPTK…PVAP, PAEA…PAQP, and PKLA…APAA. 2 stretches are compositionally biased toward basic and acidic residues: residues 204–217 and 275–295; these read SGGR…KRES and RSLD…DAGK. Positions 311-328 are enriched in low complexity; the sequence is PSAPAKPAAPTGSSGPAA. The span at 331–344 shows a compositional bias: basic and acidic residues; sequence PDIKLTRDVIEGHK. A compositionally biased stretch (basic residues) spans 422 to 435; sequence HHYRRSRPRIRRKG. The tr-type G domain maps to 529-696; the sequence is ARPPVVTFLG…TLLTIAELNE (168 aa). Positions 538–545 are G1; sequence GHVDHGKT. 538-545 is a GTP binding site; that stretch reads GHVDHGKT. A G2 region spans residues 563 to 567; sequence GITQH. Residues 584 to 587 form a G3 region; the sequence is DTPG. Residues 584 to 588 and 638 to 641 each bind GTP; these read DTPGH and NKID. The interval 638–641 is G4; it reads NKID. Positions 674-676 are G5; it reads SAT.

Belongs to the TRAFAC class translation factor GTPase superfamily. Classic translation factor GTPase family. IF-2 subfamily.

It localises to the cytoplasm. One of the essential components for the initiation of protein synthesis. Protects formylmethionyl-tRNA from spontaneous hydrolysis and promotes its binding to the 30S ribosomal subunits. Also involved in the hydrolysis of GTP during the formation of the 70S ribosomal complex. This Rhodopirellula baltica (strain DSM 10527 / NCIMB 13988 / SH1) protein is Translation initiation factor IF-2.